The chain runs to 214 residues: Riboflavin kinase (214 aa).

The disordered stretch occupies residues 1–26; that stretch reads MRPDGPRDPVVGPDSGPEPPYPVRLS. 2 residues coordinate Mg(2+): Thr-44 and Asn-46. Catalysis depends on Glu-112, which acts as the Nucleophile.

Belongs to the flavokinase family. The cofactor is Zn(2+). Requires Mg(2+) as cofactor.

It catalyses the reaction riboflavin + ATP = FMN + ADP + H(+). It functions in the pathway cofactor biosynthesis; FMN biosynthesis; FMN from riboflavin (ATP route): step 1/1. Functionally, catalyzes the phosphorylation of riboflavin (vitamin B2) to form flavin mononucleotide (FMN) coenzyme. The chain is Riboflavin kinase (fmn1) from Aspergillus clavatus (strain ATCC 1007 / CBS 513.65 / DSM 816 / NCTC 3887 / NRRL 1 / QM 1276 / 107).